Here is a 60-residue protein sequence, read N- to C-terminus: Cecropin-B (60 aa).

The first 25 residues, 1–25, serve as a signal peptide directing secretion; that stretch reads MNFTKLFILVAIAVLVVVGVQPVDG. Residue Leu-59 is modified to Leucine amide.

It belongs to the cecropin family.

The protein localises to the secreted. In terms of biological role, cecropins have lytic and antibacterial activity against several Gram-positive and Gram-negative bacteria. The sequence is that of Cecropin-B (CecB) from Anopheles gambiae (African malaria mosquito).